We begin with the raw amino-acid sequence, 381 residues long: Gas vesicle protein C (381 aa).

Tandem repeats lie at residues 22 to 59 (QAFA…NSTN), 60 to 84 (DAFR…ADRR), 85 to 122 (DAFD…DETH), 123 to 160 (EAFD…VSVQ), 161 to 192 (GEFN…KDVA), 193 to 232 (DAFL…ETTE), and 233 to 274 (EAFA…IPPI). The interval 22–274 (QAFAAYADEF…TETEVDIPPI (253 aa)) is 7 X approximate tandem repeats. The interval 261 to 333 (AVTGTETEVD…EDDQFLDDET (73 aa)) is disordered. A compositionally biased stretch (acidic residues) spans 276 to 318 (DSVEPDGEDEDSKADDVEAEAEVETVEMEFGAEMDTEADEDVQ).

This sequence belongs to the halobacterial gas vesicle GvpC family. Post-translationally, detected as 2 slightly different sizes in vivo; the proteins appears larger in SDS-PAGE probably due to the acidic tail.

The protein localises to the gas vesicle. Its function is as follows. Confers stability, involved in shaping gas vesicles (GV), hollow, gas filled proteinaceous nanostructures found in some microorganisms. They allow positioning of halobacteria at the optimal depth for growth in the poorly aerated, shallow brine pools of their habitat. Functionally, expression of a 9.5 kb mc-vac DNA fragment containing 2 divergently transcribed regions (gvpD-gvpE-gvpF-gvpG-gvpH-gvpI-gvpJ-gvpK-gvpL-gvpM and gvpA-gvpC-gvpN-gvpO) allows H.volcanii to produce gas vesicles. The sequence is that of Gas vesicle protein C from Haloferax mediterranei (strain ATCC 33500 / DSM 1411 / JCM 8866 / NBRC 14739 / NCIMB 2177 / R-4) (Halobacterium mediterranei).